Reading from the N-terminus, the 60-residue chain is MDLKVTLIKSVAHRLPKQRKIVKALGLGKVNSTVVLPDNAATRGALLKIAHLISVEEVNK.

This sequence belongs to the universal ribosomal protein uL30 family. In terms of assembly, part of the 50S ribosomal subunit.

The chain is Large ribosomal subunit protein uL30 from Lactobacillus johnsonii (strain CNCM I-12250 / La1 / NCC 533).